A 128-amino-acid chain; its full sequence is Large ribosomal subunit protein bL12 (128 aa).

It belongs to the bacterial ribosomal protein bL12 family. As to quaternary structure, homodimer. Part of the ribosomal stalk of the 50S ribosomal subunit. Forms a multimeric L10(L12)X complex, where L10 forms an elongated spine to which 2 to 4 L12 dimers bind in a sequential fashion. Binds GTP-bound translation factors.

In terms of biological role, forms part of the ribosomal stalk which helps the ribosome interact with GTP-bound translation factors. Is thus essential for accurate translation. This Synechocystis sp. (strain ATCC 27184 / PCC 6803 / Kazusa) protein is Large ribosomal subunit protein bL12.